The primary structure comprises 360 residues: Phospho-N-acetylmuramoyl-pentapeptide-transferase (360 aa).

The next 10 helical transmembrane spans lie at 25 to 45, 73 to 93, 97 to 117, 135 to 155, 170 to 190, 199 to 219, 236 to 256, 263 to 283, 288 to 308, and 338 to 358; these read RGIL…PWMI, TMGG…WADL, YVWV…VDDY, FWQS…APSA, IPLG…SSNA, GLAI…CYLS, AGEL…FLWF, VFMG…MAVI, MVLF…VIQV, and VIVR…ATLK.

Belongs to the glycosyltransferase 4 family. MraY subfamily. The cofactor is Mg(2+).

The protein resides in the cell inner membrane. The enzyme catalyses UDP-N-acetyl-alpha-D-muramoyl-L-alanyl-gamma-D-glutamyl-meso-2,6-diaminopimeloyl-D-alanyl-D-alanine + di-trans,octa-cis-undecaprenyl phosphate = di-trans,octa-cis-undecaprenyl diphospho-N-acetyl-alpha-D-muramoyl-L-alanyl-D-glutamyl-meso-2,6-diaminopimeloyl-D-alanyl-D-alanine + UMP. The protein operates within cell wall biogenesis; peptidoglycan biosynthesis. Functionally, catalyzes the initial step of the lipid cycle reactions in the biosynthesis of the cell wall peptidoglycan: transfers peptidoglycan precursor phospho-MurNAc-pentapeptide from UDP-MurNAc-pentapeptide onto the lipid carrier undecaprenyl phosphate, yielding undecaprenyl-pyrophosphoryl-MurNAc-pentapeptide, known as lipid I. The sequence is that of Phospho-N-acetylmuramoyl-pentapeptide-transferase from Pseudomonas syringae pv. syringae (strain B728a).